We begin with the raw amino-acid sequence, 281 residues long: 32 kDa heat shock protein (281 aa).

Acidic residues predominate over residues 142–168; sequence EDDEEIDSDEEFGDSDQDEEDSDDEEI. Residues 142 to 281 are disordered; sequence EDDEEIDSDE…NENNKKKQKN (140 aa). Residues 180-209 are compositionally biased toward basic and acidic residues; the sequence is KITEISEVPESKKEKTPEPKKVPEPKKEQV. A compositionally biased stretch (low complexity) spans 210–273; the sequence is KQPTQPQQKK…NNKRPQNQNE (64 aa).

The polypeptide is 32 kDa heat shock protein (hspC) (Dictyostelium discoideum (Social amoeba)).